The sequence spans 1287 residues: MEPIYPFARPQMNTRFPSSRMVPFHFPPSKCALWNPTPTGDFIYLHLSYYRNPKLVVTEKTIRLAYRHAKQNKKNSSCFLLGSLTADEDEEGVTLTVDRFDPGREVPECLEITPTASLPGDFLIPCKVHTQELCSREMIVHSVDDFSSALKALQCHICSKDSLDCGKLLSLRVHITSRESLDSVEFDLHWAAVTLANNFKCTPVKPIPIIPTALARNLSSNLNISQVQGTYKYGYLTMDETRKLLLLLESDPKVYSLPLVGIWLSGITHIYSPQVWACCLRYIFNSSVQERVFSESGNFIIVLYSMTHKEPEFYECFPCDGKIPDFRFQLLTSKETLHLFKNVEPPDKNPIRCELSAESQNAETEFFSKASKNFSIKRSSQKLSSGKMPIHDHDSGVEDEDFSPRPIPSPHPVSQKISKIQPSVPELSLVLDGNFIESNPLPTPLEMVNNENPPLINHLEHLKPLQPQLYDEKHSPEVEAGEPSLRGIPNQLNQDKPALLRHCKVRQPPAYKKGNPHTRNSIKPSSHNGPSHDIFEKLQTVSAGNVQNEEYPIRPSTLNSRQSSLAPQSQPHDFVFSPHNSGRPMELQIPTPPLPSYCSTNVCRCCQHHSHIQYSPLNSWQGANTVGSIQDVQSEALQKHSLFHPSGCPALYCNAFCSSSSPIALRPQGDMGSCSPHSNIEPSPVARPPSHMDLCNPQPCTVCMHTPKTESDNGMMGLSPDAYRFLTEQDRQLRLLQAQIQRLLEAQSLMPCSPKTTAVEDTVQAGRQMELVSVEAQSSPGLHMRKGVSIAVSTGASLFWNAAGEDQEPDSQMKQDDTKISSEDMNFSVDINNEVTSLPGSASSLKAVDIPSFEESNIAVEEEFNQPLSVSNSSLVVRKEPDVPVFFPSGQLAESVSMCLQTGPTGGASNNSETSEEPKIEHVMQPLLHQPSDNQKIYQDLLGQVNHLLNSSSKETEQPSTKAVIISHECTRTQNVYHTKKKTHHSRLVDKDCVLNATLKQLRSLGVKIDSPTKVKKNAHNVDHASVLACISPEAVISGLNCMSFANVGMSGLSPNGVDLSMEANAIALKYLNENQLSQLSVTRSNQNNCDPFSLLHINTDRSTVGLSLISPNNMSFATKKYMKRYGLLQSSDNSEDEEEPPDNADSKSEYLLNQNLRSIPEQLGGQKEPSKNDHEIINCSNCESVGTNADTPVLRNITNEVLQTKAKQQLTEKPAFLVKNLKPSPAVNLRTGKAEFTQHPEKENEGDITIFPESLQPSETLKQMNSMNSVGTFLDVKRLRQLPKLF.

Position 1 is an N-acetylmethionine (methionine 1). Residues methionine 1–asparagine 1018 form an interaction with RBM14 region. Residues tyrosine 231–glycine 781 form an interaction with CPAP region. 2 disordered regions span residues arginine 378–isoleucine 417 and proline 508–aspartate 533. Serine 395 carries the post-translational modification Phosphoserine. Polar residues predominate over residues histidine 517–glycine 529. The PIN1-binding stretch occupies residues proline 584–serine 779. A phosphoserine mark is found at serine 753, serine 779, and serine 1135.

Homodimer. Interacts with PIN1 via its WW domain. This interaction is dependent on STIL mitotic phosphorylation. Interacts with CPAP. Interacts with RBM14 and this interaction interferes with the interaction of STIL with CPAP. Forms a complex with CPAP and SASS6. Interacts (via N-terminus) with CEP85; this interaction is essential for efficient centriolar targeting of STIL and subsequent PLK4 activation. In terms of processing, ubiquitinated. Post-translationally, phosphorylated following the activation of the mitotic checkpoint. In terms of tissue distribution, expressed in all hematopoietic tissues and cell lines. Highly expressed in a variety of tumors characterized by increased mitotic activity with highest expression in lung cancer.

Its subcellular location is the cytoplasm. It is found in the cytosol. It localises to the cytoskeleton. The protein localises to the microtubule organizing center. The protein resides in the centrosome. Its subcellular location is the centriole. It is found in the cell cortex. Its function is as follows. Immediate-early gene. Plays an important role in embryonic development as well as in cellular growth and proliferation; its long-term silencing affects cell survival and cell cycle distribution as well as decreases CDK1 activity correlated with reduced phosphorylation of CDK1. Plays a role as a positive regulator of the sonic hedgehog pathway, acting downstream of PTCH1. Plays an important role in the regulation of centriole duplication. Required for the onset of procentriole formation and proper mitotic progression. During procentriole formation, is essential for the correct loading of SASS6 and CPAP to the base of the procentriole to initiate procentriole assembly. In complex with STIL acts as a modulator of PLK4-driven cytoskeletal rearrangements and directional cell motility. The chain is SCL-interrupting locus protein (STIL) from Homo sapiens (Human).